We begin with the raw amino-acid sequence, 639 residues long: Chaperone protein HtpG (639 aa).

Residues 1–348 (MAQYEFQTEV…SEDLPLNVSR (348 aa)) are a; substrate-binding. A b region spans residues 349-565 (EILQQNRVLA…ENDPTVQMER (217 aa)). Residues 566–639 (LMRATGQTHK…KRVNRLLARG (74 aa)) form a c region.

This sequence belongs to the heat shock protein 90 family. Homodimer.

Its subcellular location is the cytoplasm. In terms of biological role, molecular chaperone. Has ATPase activity. This Treponema pallidum (strain Nichols) protein is Chaperone protein HtpG.